A 271-amino-acid polypeptide reads, in one-letter code: D-methionine-binding lipoprotein MetQ (271 aa).

The first 22 residues, 1–22 (MSLKFKSIAAISALIGTLTLVG), serve as a signal peptide directing secretion. Cys-23 carries N-palmitoyl cysteine lipidation. A lipid anchor (S-diacylglycerol cysteine) is attached at Cys-23.

The protein belongs to the NlpA lipoprotein family.

Its subcellular location is the cell membrane. Functionally, this protein is a component of a D-methionine permease, a binding protein-dependent, ATP-driven transport system. The protein is D-methionine-binding lipoprotein MetQ (metQ) of Yersinia pestis.